The primary structure comprises 257 residues: Receptor expression-enhancing protein 4 (257 aa).

Transmembrane regions (helical) follow at residues 1–21 and 42–62; these read MVSWMICRLVVLVFGMLCPAY and WIVFALFMAAEIITDIFISWF. Phosphoserine occurs at positions 152 and 194. A disordered region spans residues 178–257; sequence PHQRPPIGYR…KKTVPSDMDS (80 aa). At Thr196 the chain carries Phosphothreonine. A Phosphoserine modification is found at Ser202. Phosphothreonine is present on Thr250. The residue at position 253 (Ser253) is a Phosphoserine.

The protein belongs to the DP1 family.

It localises to the endoplasmic reticulum membrane. Its function is as follows. Microtubule-binding protein required to ensure proper cell division and nuclear envelope reassembly by sequestering the endoplasmic reticulum away from chromosomes during mitosis. Probably acts by clearing the endoplasmic reticulum membrane from metaphase chromosomes. This is Receptor expression-enhancing protein 4 (REEP4) from Pongo abelii (Sumatran orangutan).